The sequence spans 389 residues: Acyl-[acyl-carrier-protein] dehydrogenase MbtN (389 aa).

This sequence belongs to the acyl-CoA dehydrogenase family. It depends on FAD as a cofactor.

It functions in the pathway siderophore biosynthesis; mycobactin biosynthesis. In terms of biological role, catalyzes the dehydrogenation at the alpha-beta position of ACP-bound acyl chains. This results in the introduction of a double bond in the lipidic chain, which is further transferred to the epsilon-amino group of lysine residue in the mycobactin core by MbtK. This Mycobacterium sp. (strain MCS) protein is Acyl-[acyl-carrier-protein] dehydrogenase MbtN (mbtN).